A 447-amino-acid chain; its full sequence is Serine/threonine-protein kinase NLK2 (447 aa).

One can recognise a Protein kinase domain in the interval 60–349 (PEPDRPIGYG…AKDALAHPYL (290 aa)). Residues 66 to 74 (IGYGAFGVV) and K89 contribute to the ATP site. D186 acts as the Proton acceptor in catalysis.

Belongs to the protein kinase superfamily. CMGC Ser/Thr protein kinase family. MAP kinase subfamily. Interacts with sox11, hmgxb4/hmg2l1, rnf138/narf, stat3.1 and mef2a. The cofactor is Mg(2+). In terms of tissue distribution, expressed widely in the ectoderm during early gastrula stage when neural induction is taking place. Expressed in the head region of neurula stage embryos. At the end of neurulation, expression becomes localized to the nervous system, and is restricted to the central nervous system, eye and head neural crest cells by the early tadpole stages.

It is found in the nucleus. It localises to the cytoplasm. It catalyses the reaction L-seryl-[protein] + ATP = O-phospho-L-seryl-[protein] + ADP + H(+). The enzyme catalyses L-threonyl-[protein] + ATP = O-phospho-L-threonyl-[protein] + ADP + H(+). With respect to regulation, activated by tyrosine and threonine phosphorylation. Its function is as follows. Negatively regulates Wnt/beta-catenin-signaling during development. Plays a role together with sox11 in neural induction during early embryogenesis. Involved in TGFbeta-mediated mesoderm induction in early embryos, acting downstream of map3k7/tak1 to phosphorylate stat3.1. Augments the rnf138/narf-directed ubiquitination and degradation of tcf/lef by enhancing the association of rnf138/narf and tcf/lef. Phosphorylates mef2a to play a role in anterior neural development, including eye formation. The polypeptide is Serine/threonine-protein kinase NLK2 (nlk.2) (Xenopus laevis (African clawed frog)).